The chain runs to 307 residues: Ribonuclease Z (307 aa).

Positions 62, 64, 66, 67, 139, 210, and 268 each coordinate Zn(2+). Residue D66 is the Proton acceptor of the active site.

It belongs to the RNase Z family. In terms of assembly, homodimer. Zn(2+) is required as a cofactor.

The catalysed reaction is Endonucleolytic cleavage of RNA, removing extra 3' nucleotides from tRNA precursor, generating 3' termini of tRNAs. A 3'-hydroxy group is left at the tRNA terminus and a 5'-phosphoryl group is left at the trailer molecule.. In terms of biological role, zinc phosphodiesterase, which displays some tRNA 3'-processing endonuclease activity. Probably involved in tRNA maturation, by removing a 3'-trailer from precursor tRNA. The sequence is that of Ribonuclease Z from Myxococcus xanthus (strain DK1622).